The following is a 382-amino-acid chain: Pyrimidine monooxygenase RutA (382 aa).

Residues 68-69, asparagine 134, glutamate 143, 159-160, and serine 209 contribute to the FMN site; these read IK and RY.

The protein belongs to the NtaA/SnaA/DszA monooxygenase family. RutA subfamily.

It catalyses the reaction uracil + FMNH2 + NADH + O2 = (Z)-3-ureidoacrylate + FMN + NAD(+) + H2O + H(+). The enzyme catalyses thymine + FMNH2 + NADH + O2 = (Z)-2-methylureidoacrylate + FMN + NAD(+) + H2O + H(+). In terms of biological role, catalyzes the pyrimidine ring opening between N-3 and C-4 by an unusual flavin hydroperoxide-catalyzed mechanism, adding oxygen atoms in the process to yield ureidoacrylate peracid, that immediately reacts with FMN forming ureidoacrylate and FMN-N(5)-oxide. The FMN-N(5)-oxide reacts spontaneously with NADH to produce FMN. Requires the flavin reductase RutF to regenerate FMN in vivo. The protein is Pyrimidine monooxygenase RutA of Escherichia coli (strain B / BL21-DE3).